A 349-amino-acid polypeptide reads, in one-letter code: Nicotinate-nucleotide--dimethylbenzimidazole phosphoribosyltransferase (349 aa).

E315 (proton acceptor) is an active-site residue.

Belongs to the CobT family.

The catalysed reaction is 5,6-dimethylbenzimidazole + nicotinate beta-D-ribonucleotide = alpha-ribazole 5'-phosphate + nicotinate + H(+). It functions in the pathway nucleoside biosynthesis; alpha-ribazole biosynthesis; alpha-ribazole from 5,6-dimethylbenzimidazole: step 1/2. Catalyzes the synthesis of alpha-ribazole-5'-phosphate from nicotinate mononucleotide (NAMN) and 5,6-dimethylbenzimidazole (DMB). The sequence is that of Nicotinate-nucleotide--dimethylbenzimidazole phosphoribosyltransferase from Variovorax paradoxus (strain S110).